Here is a 628-residue protein sequence, read N- to C-terminus: uncharacterized protein (628 aa).

It belongs to the IucA/IucC family.

This is an uncharacterized protein from Sinorhizobium fredii (strain NBRC 101917 / NGR234).